The sequence spans 250 residues: Proteasome subunit alpha type-2 (250 aa).

Lysine 108 is covalently cross-linked (Glycyl lysine isopeptide (Lys-Gly) (interchain with G-Cter in ubiquitin)).

The protein belongs to the peptidase T1A family. As to quaternary structure, the 26S proteasome consists of a 20S proteasome core and two 19S regulatory subunits. The 20S proteasome core is composed of 28 subunits that are arranged in four stacked rings, resulting in a barrel-shaped structure. The two end rings are each formed by seven alpha subunits, and the two central rings are each formed by seven beta subunits. The catalytic chamber with the active sites is on the inside of the barrel.

It localises to the cytoplasm. The protein localises to the nucleus. The proteasome degrades poly-ubiquitinated proteins in the cytoplasm and in the nucleus. It is essential for the regulated turnover of proteins and for the removal of misfolded proteins. The proteasome is a multicatalytic proteinase complex that is characterized by its ability to cleave peptides with Arg, Phe, Tyr, Leu, and Glu adjacent to the leaving group at neutral or slightly basic pH. It has an ATP-dependent proteolytic activity. The polypeptide is Proteasome subunit alpha type-2 (PRE8) (Saccharomyces cerevisiae (strain ATCC 204508 / S288c) (Baker's yeast)).